The following is a 143-amino-acid chain: Large ribosomal subunit protein uL15 (143 aa).

The tract at residues 1 to 51 (MELNTIKPASGAKHAKRRVGRGIGSGLGKTAGRGHKGQKSRAGGYHKVGFE) is disordered. A compositionally biased stretch (gly residues) spans 21–31 (RGIGSGLGKTA).

The protein belongs to the universal ribosomal protein uL15 family. As to quaternary structure, part of the 50S ribosomal subunit.

In terms of biological role, binds to the 23S rRNA. The protein is Large ribosomal subunit protein uL15 of Methylibium petroleiphilum (strain ATCC BAA-1232 / LMG 22953 / PM1).